Consider the following 121-residue polypeptide: Large ribosomal subunit protein bL12 (121 aa).

Belongs to the bacterial ribosomal protein bL12 family. As to quaternary structure, homodimer. Part of the ribosomal stalk of the 50S ribosomal subunit. Forms a multimeric L10(L12)X complex, where L10 forms an elongated spine to which 2 to 4 L12 dimers bind in a sequential fashion. Binds GTP-bound translation factors.

Forms part of the ribosomal stalk which helps the ribosome interact with GTP-bound translation factors. Is thus essential for accurate translation. The polypeptide is Large ribosomal subunit protein bL12 (Streptococcus pyogenes serotype M3 (strain ATCC BAA-595 / MGAS315)).